The primary structure comprises 1003 residues: Retinoblastoma-related protein 1 (1003 aa).

Residues T405 to L607 form a domain A region. The pocket stretch occupies residues T405 to P860. Residues A608 to E729 are spacer. A domain B region spans residues T730 to P860. Residues A868–P899 are disordered.

The protein belongs to the retinoblastoma protein (RB) family. As to expression, expressed in roots, stems, leaves and flowers.

The protein resides in the nucleus. Its function is as follows. Regulator of biological processes that recruits a histone deacetylase to control gene transcription. Formation of stable complexes with geminiviridae replication-associated proteins may create a cellular environment which favors viral DNA replication. May play a role in the entry into mitosis, negatively regulating the cell proliferation during leaf, stem, and flower development. Critical regulator of the endocycle. The polypeptide is Retinoblastoma-related protein 1 (RBR1) (Nicotiana benthamiana).